The sequence spans 383 residues: E3 ubiquitin-protein ligase SPL2 (383 aa).

The Cytoplasmic segment spans residues 1–14; that stretch reads MSSPERALLNLLTD. The chain crosses the membrane as a helical span at residues 15 to 35; it reads IALSFDGAILGLTLAVSAVGS. The Chloroplast intermembrane portion of the chain corresponds to 36 to 269; that stretch reads ALKYASTNAA…MIEDLMEQTN (234 aa). Residues 270 to 290 traverse the membrane as a helical segment; sequence FIFLGSVILGIVSVGILSYAA. Residues 291 to 383 are Cytoplasmic-facing; that stretch reads VRTWNKWKQW…IRGSMRVYYS (93 aa). An RING-type zinc finger spans residues 331 to 370; sequence CVICVSRRRVPAFIPCGHVVCCRRCASTVERELNPKCPVC.

It is found in the plastid. It localises to the chloroplast outer membrane. It catalyses the reaction S-ubiquitinyl-[E2 ubiquitin-conjugating enzyme]-L-cysteine + [acceptor protein]-L-lysine = [E2 ubiquitin-conjugating enzyme]-L-cysteine + N(6)-ubiquitinyl-[acceptor protein]-L-lysine.. It participates in protein modification; protein ubiquitination. Functionally, possesses E3 ubiquitin-protein ligase activity. The sequence is that of E3 ubiquitin-protein ligase SPL2 from Arabidopsis thaliana (Mouse-ear cress).